The following is a 172-amino-acid chain: Large ribosomal subunit protein uL10 (172 aa).

Belongs to the universal ribosomal protein uL10 family. Part of the ribosomal stalk of the 50S ribosomal subunit. The N-terminus interacts with L11 and the large rRNA to form the base of the stalk. The C-terminus forms an elongated spine to which L12 dimers bind in a sequential fashion forming a multimeric L10(L12)X complex.

Functionally, forms part of the ribosomal stalk, playing a central role in the interaction of the ribosome with GTP-bound translation factors. The polypeptide is Large ribosomal subunit protein uL10 (Xanthobacter autotrophicus (strain ATCC BAA-1158 / Py2)).